A 155-amino-acid polypeptide reads, in one-letter code: SsrA-binding protein (155 aa).

It belongs to the SmpB family.

It is found in the cytoplasm. Required for rescue of stalled ribosomes mediated by trans-translation. Binds to transfer-messenger RNA (tmRNA), required for stable association of tmRNA with ribosomes. tmRNA and SmpB together mimic tRNA shape, replacing the anticodon stem-loop with SmpB. tmRNA is encoded by the ssrA gene; the 2 termini fold to resemble tRNA(Ala) and it encodes a 'tag peptide', a short internal open reading frame. During trans-translation Ala-aminoacylated tmRNA acts like a tRNA, entering the A-site of stalled ribosomes, displacing the stalled mRNA. The ribosome then switches to translate the ORF on the tmRNA; the nascent peptide is terminated with the 'tag peptide' encoded by the tmRNA and targeted for degradation. The ribosome is freed to recommence translation, which seems to be the essential function of trans-translation. This chain is SsrA-binding protein, found in Streptococcus equi subsp. zooepidemicus (strain H70).